Reading from the N-terminus, the 356-residue chain is DNA polymerase IV (356 aa).

Positions 7–188 constitute a UmuC domain; that stretch reads IIHIDMDAFY…IPVTKFYGVG (182 aa). Mg(2+)-binding residues include aspartate 11 and aspartate 106. The active site involves glutamate 107.

This sequence belongs to the DNA polymerase type-Y family. Monomer. The cofactor is Mg(2+).

It localises to the cytoplasm. It carries out the reaction DNA(n) + a 2'-deoxyribonucleoside 5'-triphosphate = DNA(n+1) + diphosphate. In terms of biological role, poorly processive, error-prone DNA polymerase involved in untargeted mutagenesis. Copies undamaged DNA at stalled replication forks, which arise in vivo from mismatched or misaligned primer ends. These misaligned primers can be extended by PolIV. Exhibits no 3'-5' exonuclease (proofreading) activity. May be involved in translesional synthesis, in conjunction with the beta clamp from PolIII. This Listeria monocytogenes serotype 4a (strain HCC23) protein is DNA polymerase IV.